Reading from the N-terminus, the 63-residue chain is uncharacterized protein (63 aa).

Residues 38–58 form a helical membrane-spanning segment; it reads ISLFIILHLCLLVCLLLSFYF.

The protein localises to the membrane. This is an uncharacterized protein from Saccharomyces cerevisiae (strain ATCC 204508 / S288c) (Baker's yeast).